Reading from the N-terminus, the 389-residue chain is MTETTPAKPKGPFDGLLVIDLTHVLNGPFGTTILTDLGARTIKIEPPGHGDDTRTYGPYVGDQSLYFSFVNRGKESIVLNLKDEGDRAIFLEMVRKADVLAENFRPGVMDRLGFNYEELAKINPRLIYASSSGFGQTGPLAHYPAYDTIVQAMSGIMMATGFPDGPPTRVGGTSLSDLCGGVFMFCGIASALYARERTGKGAHIDVSMFDGTLAFLQHALMCWSATGKAPARIGNRHPYMAPFDVFQAQDKPFVICCGNDHLFKALCDVIGAPELATDPRFVENHDRMANNDALKAALEKALSKQPAAHWLDVIHKAGVPVGPLLDVAEAANLPQTAARNMLIKSGGVMMPGNPVKISGYDDPHERPGAPKLDEQGAALRKEFAAPEAK.

His-237 is a catalytic residue.

As to quaternary structure, homodimer.

It carries out the reaction oxalate + acetyl-CoA = oxalyl-CoA + acetate. Its function is as follows. Involved in the catabolism of oxalate and in the adapatation to low pH. ACOCT serves to prime the oxalate-induced acid tolerance response (ATR) cycle by producing substrate for oxalyl-CoA decarboxylase (OXC) and formyl-coenzyme A transferase (FCOCT). Catalyzes the reversible conversion of acetyl-CoA and oxalate to oxalyl-CoA and acetate. It can also use formyl-CoA and oxalate to produce oxalyl-CoA and formate with significantly reduced specific activity. In Acetobacter aceti, this protein is Acetyl-CoA:oxalate CoA-transferase (uctC).